A 97-amino-acid chain; its full sequence is Acylphosphatase (97 aa).

The Acylphosphatase-like domain maps to 9-97 (RKHIVVTGLV…ETARAFGVRQ (89 aa)). Residues arginine 24 and asparagine 42 contribute to the active site.

The protein belongs to the acylphosphatase family.

It carries out the reaction an acyl phosphate + H2O = a carboxylate + phosphate + H(+). This chain is Acylphosphatase (acyP), found in Bifidobacterium longum (strain NCC 2705).